The primary structure comprises 172 residues: Trypsin inhibitor 1B (172 aa).

2 cysteine pairs are disulfide-bonded: Cys-40–Cys-84 and Cys-133–Cys-139.

This sequence belongs to the protease inhibitor I3 (leguminous Kunitz-type inhibitor) family.

Functionally, WTI-1B inhibits trypsin stoichiometrically. The chain is Trypsin inhibitor 1B from Psophocarpus tetragonolobus (Winged bean).